The sequence spans 201 residues: Small ribosomal subunit protein uS4c (201 aa).

The interval Pro-19–Ser-38 is disordered. In terms of domain architecture, S4 RNA-binding spans Met-89 to Gln-149.

This sequence belongs to the universal ribosomal protein uS4 family. Part of the 30S ribosomal subunit. Contacts protein S5. The interaction surface between S4 and S5 is involved in control of translational fidelity.

It localises to the plastid. The protein localises to the chloroplast. Its function is as follows. One of the primary rRNA binding proteins, it binds directly to 16S rRNA where it nucleates assembly of the body of the 30S subunit. Functionally, with S5 and S12 plays an important role in translational accuracy. In Platanus occidentalis (Sycamore), this protein is Small ribosomal subunit protein uS4c (rps4).